We begin with the raw amino-acid sequence, 424 residues long: Chloroquine resistance transporter (424 aa).

Residues 1 to 49 (MKFASKKNNQKNSSKNDERYRELDNLVQEGNGSRLGGGSCLGKCAHVFK) are Cytoplasmic-facing. Residues 50 to 58 (LIFKEIKDN) lie within the membrane without spanning it. A helical membrane pass occupies residues 59–83 (IFIYILSIIYLSVSVMNTIFAKRTL). The Vacuolar portion of the chain corresponds to 84–89 (NKIGNY). A helical transmembrane segment spans residues 90–111 (SFVTSETHNFICMIMFFIVYSL). Topologically, residues 112–126 (FGNKKGNSKERHRSF) are cytoplasmic. The chain crosses the membrane as a helical span at residues 127–147 (NLQFFAISMLDACSVILAFIG). The Vacuolar portion of the chain corresponds to 148–152 (LTRTT). Residues 153-173 (GNIQSFVLQLSIPINMFFCFL) form a helical membrane-spanning segment. At 174-180 (ILRYRYH) the chain is on the cytoplasmic side. A helical membrane pass occupies residues 181–202 (LYNYLGAVIIVVTIALVEMKLS). Topologically, residues 203–210 (FETQEENS) are vacuolar. The chain crosses the membrane as a helical span at residues 211-236 (IIFNLVLISSLIPVCFSNMTREIVFK). Topologically, residues 237–241 (KYKID) are cytoplasmic. Residues 242 to 263 (ILRLNAMVSFFQLFTSCLILPV) traverse the membrane as a helical segment. The Vacuolar portion of the chain corresponds to 264–279 (YTLPFLKQLHLPYNEI). The stretch at 280–292 (WTNIKNGFACLFL) is an intramembrane region. Disulfide bonds link Cys-289–Cys-312 and Cys-301–Cys-309. The Vacuolar segment spans residues 293 to 314 (GRNTVVENCGLGMAKLCDDCDG). Residues 315–339 (AWKTFALFSFFDICDNLITSYIIDK) traverse the membrane as a helical segment. At 340–343 (FSTM) the chain is on the cytoplasmic side. Residues 344–361 (TYTIVSCIQGPALAIAYY) form a helical membrane-spanning segment. Over 362-374 (FKFLAGDVVREPR) the chain is Vacuolar. The helical transmembrane segment at 375–397 (LLDFVTLFGYLFGSIIYRVGNII) threads the bilayer. Residues 398–424 (LERKKMRNEENEDSEGELTNVDSIITQ) lie on the Cytoplasmic side of the membrane.

This sequence belongs to the CRT-like transporter family. Monomer.

The protein resides in the membrane. It is found in the vacuole membrane. The catalysed reaction is L-arginine(in) = L-arginine(out). The enzyme catalyses L-lysine(in) = L-lysine(out). It catalyses the reaction L-histidine(out) = L-histidine(in). It carries out the reaction Fe(3+)(in) = Fe(3+)(out). The catalysed reaction is Fe(2+)(in) = Fe(2+)(out). Functionally, nutrient transporter. Substrate transport is pH-dependent. Can transport arginine, lysine, histidine and peptides. Involved in maintaining the osmotic homeostasis of the digestive vacuole. Required for the normal asexual intraerythrocytic proliferation of parasites. Can transport Fe(2+) and Fe(3+). The polypeptide is Chloroquine resistance transporter (Plasmodium falciparum (isolate 7G8)).